The chain runs to 479 residues: Baeyer-Villiger monooxygenase AacuH (479 aa).

Positions 14 to 34 (DSLGHPDGASRPPVSAESLSR) are disordered.

It belongs to the AflY oxidoreductase family.

Its pathway is secondary metabolite biosynthesis. Functionally, baeyer-Villiger monooxygenase; part of the gene cluster that mediates the biosynthesis of the tetrahydroxanthone dimer secalonic acid D. The pathway begins with the synthesis of atrochrysone thioester by the polyketide synthase AacuL. The atrochrysone carboxyl ACP thioesterase AacuM then breaks the thioester bond and releases the atrochrysone carboxylic acid from AacuL. Atrochrysone carboxylic acid is decarboxylated by the decarboxylase AacuI, and oxidized by the anthrone oxygenase AacuG to yield emodin. Emodin is then reduced to emodin hydroquinone by a yet unidentified oxidoreductase. A-ring reduction by the short chain dehydrogenase AacuN, dehydration by the scytalone dehydratase-like protein AacuK and probable spontaneous re-oxidation, results in overall deoxygenation to chrysophanol. Baeyer-Villiger oxidation by the Baeyer-Villiger monooxygenase (BVMO) AacuH then yields monodictyphenone. Monodictyphenone is transformed into compounds with the tetrahydroxanthone skeleton via methylesterification by the methyltransferase AacuQ, followed by the action of the flavin-dependent monooxygenase AacuC, the isomerase AacuP, and the short chain dehydrogenase/reductase AacuF or AacuD. AacuF and AacuD should accept the same compound as a substrate but perform the ketoreduction with a different stereoselectivity, thus yielding blennolides B and A, respectively. In the final step of the biosynthesis, the cytochrome P450 monooxygenase AacuE accepts blennolide B and/or blennolide A to conduct the dimerization reaction to furnish the tetrahydroxanthone dimers, secalonic acids D, B, and F. The polypeptide is Baeyer-Villiger monooxygenase AacuH (Aspergillus aculeatus (strain ATCC 16872 / CBS 172.66 / WB 5094)).